Consider the following 381-residue polypeptide: Diguanylate cyclase DosC (381 aa).

His-98 is a heme binding site. In terms of domain architecture, GGDEF spans 325-381 (TPLSVLIIDVDKFKEINDTWGHNTGDEILRKVSFLSQKRLVKSKILGAGSSRKLAVS). Residue Asp-333 participates in Mg(2+) binding. Residues Asn-341 and Asp-350 each coordinate substrate.

It depends on heme as a cofactor. Mg(2+) is required as a cofactor.

It catalyses the reaction 2 GTP = 3',3'-c-di-GMP + 2 diphosphate. Its pathway is purine metabolism; 3',5'-cyclic di-GMP biosynthesis. Functionally, globin-coupled heme-based oxygen sensor protein displaying diguanylate cyclase (DGC) activity in response to oxygen availability. Thus, catalyzes the synthesis of cyclic diguanylate (c-di-GMP) via the condensation of 2 GTP molecules. Cyclic-di-GMP is a second messenger which controls cell surface-associated traits in bacteria. The sequence is that of Diguanylate cyclase DosC (dosC) from Shigella flexneri.